The following is a 232-amino-acid chain: Large ribosomal subunit protein uL1 (232 aa).

It belongs to the universal ribosomal protein uL1 family. In terms of assembly, part of the 50S ribosomal subunit.

Its function is as follows. Binds directly to 23S rRNA. The L1 stalk is quite mobile in the ribosome, and is involved in E site tRNA release. In terms of biological role, protein L1 is also a translational repressor protein, it controls the translation of the L11 operon by binding to its mRNA. This Coxiella burnetii (strain CbuK_Q154) (Coxiella burnetii (strain Q154)) protein is Large ribosomal subunit protein uL1.